A 427-amino-acid polypeptide reads, in one-letter code: Isocitrate dehydrogenase [NADP] (427 aa).

Residue threonine 114 participates in NADP(+) binding. Residues serine 123, asparagine 125, arginine 129, arginine 139, and arginine 163 each contribute to the D-threo-isocitrate site. Aspartate 317 contributes to the Mg(2+) binding site. NADP(+) is bound by residues 349-355 (HGTAPKY), asparagine 362, tyrosine 401, and arginine 405.

The protein belongs to the isocitrate and isopropylmalate dehydrogenases family. Homodimer. It depends on Mg(2+) as a cofactor. Mn(2+) is required as a cofactor.

It catalyses the reaction D-threo-isocitrate + NADP(+) = 2-oxoglutarate + CO2 + NADPH. Functionally, catalyzes the oxidative decarboxylation of isocitrate to 2-oxoglutarate and carbon dioxide with the concomitant reduction of NADP(+). In Coxiella burnetii (strain RSA 493 / Nine Mile phase I), this protein is Isocitrate dehydrogenase [NADP] (icd).